A 458-amino-acid chain; its full sequence is Carboxypeptidase N catalytic chain (458 aa).

The signal sequence occupies residues 1-20; it reads MSDLLSVFLHLLLLFKLVAP. In terms of domain architecture, Peptidase M14 spans 24 to 338; the sequence is RHHRYDDLVR…EALIQFLEQV (315 aa). An intrachain disulfide couples C42 to C104. The Zn(2+) site is built by H86, E89, and H216. C271 and C311 are oxidised to a cystine. E308 serves as the catalytic Proton donor/acceptor. T400, T402, and T409 each carry an O-linked (GalNAc...) threonine glycan. Residues 423 to 458 form a disordered region; that stretch reads SPVRRAPSRRHGVRAKVQPQARKKEMEMRQLQRGPA.

The protein belongs to the peptidase M14 family. As to quaternary structure, tetramer of two catalytic chains and two glycosylated inactive chains. Zn(2+) serves as cofactor. As to expression, synthesized in the liver and secreted in plasma.

It is found in the secreted. The protein resides in the extracellular space. It catalyses the reaction Release of a C-terminal basic amino acid, preferentially lysine.. Protects the body from potent vasoactive and inflammatory peptides containing C-terminal Arg or Lys (such as kinins or anaphylatoxins) which are released into the circulation. This chain is Carboxypeptidase N catalytic chain (CPN1), found in Homo sapiens (Human).